Consider the following 284-residue polypeptide: NAD kinase (284 aa).

The active-site Proton acceptor is Asp70. NAD(+)-binding positions include 70–71, 139–140, Lys167, Asp169, Leu177, 180–185, and Gln236; these read DG, NE, and TAYNLS.

Belongs to the NAD kinase family. The cofactor is a divalent metal cation.

The protein localises to the cytoplasm. It carries out the reaction NAD(+) + ATP = ADP + NADP(+) + H(+). Its function is as follows. Involved in the regulation of the intracellular balance of NAD and NADP, and is a key enzyme in the biosynthesis of NADP. Catalyzes specifically the phosphorylation on 2'-hydroxyl of the adenosine moiety of NAD to yield NADP. The protein is NAD kinase of Helicobacter pylori (strain HPAG1).